The primary structure comprises 523 residues: UPF0329 protein ECU02_0050 (523 aa).

A disordered region spans residues 326 to 386; that stretch reads EEKAKSKKRG…KTGKKSEGGR (61 aa). The segment covering 330-339 has biased composition (basic residues); it reads KSKKRGKRKS. Residues 344–353 are compositionally biased toward basic and acidic residues; the sequence is EAKEEEKKES. Acidic residues predominate over residues 354 to 368; that stretch reads ETEEVEAGEEVEMPS.

The protein belongs to the UPF0329 family.

This Encephalitozoon cuniculi (strain GB-M1) (Microsporidian parasite) protein is UPF0329 protein ECU02_0050.